A 323-amino-acid chain; its full sequence is Phosphate acetyltransferase (323 aa).

It belongs to the phosphate acetyltransferase and butyryltransferase family.

Its subcellular location is the cytoplasm. The catalysed reaction is acetyl-CoA + phosphate = acetyl phosphate + CoA. Its pathway is metabolic intermediate biosynthesis; acetyl-CoA biosynthesis; acetyl-CoA from acetate: step 2/2. In Bacillus subtilis (strain 168), this protein is Phosphate acetyltransferase (pta).